The primary structure comprises 287 residues: ATP synthase gamma chain (287 aa).

Belongs to the ATPase gamma chain family. In terms of assembly, F-type ATPases have 2 components, CF(1) - the catalytic core - and CF(0) - the membrane proton channel. CF(1) has five subunits: alpha(3), beta(3), gamma(1), delta(1), epsilon(1). CF(0) has three main subunits: a, b and c.

The protein resides in the cell membrane. Produces ATP from ADP in the presence of a proton gradient across the membrane. The gamma chain is believed to be important in regulating ATPase activity and the flow of protons through the CF(0) complex. This chain is ATP synthase gamma chain, found in Bacillus caldotenax.